The primary structure comprises 167 residues: Peptidoglycan L-alanyl-D-glutamate endopeptidase CwlK (167 aa).

The signal sequence occupies residues Met-1–His-26.

It belongs to the peptidase M15C family.

The protein localises to the cell membrane. Functionally, cleaves the linkage of the L-alanine-D-glutamic acid of B.subtilis cell wall. This chain is Peptidoglycan L-alanyl-D-glutamate endopeptidase CwlK (cwlK), found in Bacillus subtilis (strain 168).